Here is a 146-residue protein sequence, read N- to C-terminus: Hemoglobin subunit beta-1 (146 aa).

The Globin domain maps to 2 to 146 (KWTDKERAVI…VVSALGKQYC (145 aa)). Positions 63 and 92 each coordinate heme b.

The protein belongs to the globin family. In terms of assembly, heterotetramer of two alpha chains and two beta chains. In terms of tissue distribution, red blood cells.

Its function is as follows. Involved in oxygen transport from gills to the various peripheral tissues. In Lycodes reticulatus (Arctic eelpout), this protein is Hemoglobin subunit beta-1.